The sequence spans 428 residues: Adenylosuccinate synthetase (428 aa).

GTP-binding positions include 12-18 (GDEGKGK) and 40-42 (GHT). Aspartate 13 (proton acceptor) is an active-site residue. Aspartate 13 and glycine 40 together coordinate Mg(2+). Residues 13 to 16 (DEGK), 38 to 41 (NAGH), threonine 130, arginine 144, glutamine 225, threonine 240, and arginine 304 each bind IMP. Residue histidine 41 is the Proton donor of the active site. 300–306 (VNTGRSR) is a substrate binding site. GTP is bound by residues arginine 306, 332–334 (KID), and 414–416 (GVG).

It belongs to the adenylosuccinate synthetase family. As to quaternary structure, homodimer. It depends on Mg(2+) as a cofactor.

The protein localises to the cytoplasm. It catalyses the reaction IMP + L-aspartate + GTP = N(6)-(1,2-dicarboxyethyl)-AMP + GDP + phosphate + 2 H(+). Its pathway is purine metabolism; AMP biosynthesis via de novo pathway; AMP from IMP: step 1/2. In terms of biological role, plays an important role in the de novo pathway of purine nucleotide biosynthesis. Catalyzes the first committed step in the biosynthesis of AMP from IMP. In Clostridium beijerinckii (strain ATCC 51743 / NCIMB 8052) (Clostridium acetobutylicum), this protein is Adenylosuccinate synthetase.